A 2343-amino-acid chain; its full sequence is MQVELYTCCFLCLLPFSLSATRKYYLGAVELSWDYMQSDLLSALHADTSFSSRVPGSLPLTTSVTYRKTVFVEFTDDLFNIAKPRPPWMGLLGPTIQAEVYDTVVIVLKNMASHPVSLHAVGVSYWKASEGAEYEDQTSQKEKEDDNVIPGESHTYVWQVLKENGPMASDPPCLTYSYFSHVDLVKDLNSGLIGALLVCKEGSLAKERTQTLQEFVLLFAVFDEGKSWHSETNASLTQAEAQHELHTINGYVNRSLPGLTVCHKRSVYWHVIGMGTTPEVHSIFLEGHTFLVRNHRQASLEISPITFLTAQTFLMDLGQFLLFCHIPSHQHDGMEAYVKVDSCPEEPQLRMKNNEDKDYDDGLYDSDMDVVSFDDDSSSPFIQIRSVAKKHPKTWVHYIAAEEEDWDYAPSGPTPNDRSHKNLYLNNGPQRIGKKYKKVRFVAYTDETFKTREAIQYESGILGPLLYGEVGDTLLIIFKNQASRPYNIYPHGINYVTPLHTGRLPKGVKHLKDMPILPGEIFKYKWTVTVEDGPTKSDPRCLTRYYSSFINLERDLASGLIGPLLICYKESVDQRGNQMMSDKRNVILFSVFDENRSWYLTENMQRFLPNADVVQPHDPEFQLSNIMHSINGYVFDNLQLSVCLHEVAYWYILSVGAQTDFLSVFFSGYTFKHKMVYEDTLTLFPFSGETVFMSMENPGLWVLGCHNSDFRNRGMTALLKVSSCNRNIDDYYEDTYEDIPTPLLNENNVIKPRSFSQNSRHPSTKEKQLKATTTPENDIEKIDLQSGERTQLIKAQSVSSSDLLMLLGQNPTPRGLFLSDLREATDRADDHSRGAIERNKGPPEVASLRPELRHSEDREFTPEPELQLRLNENLGTNTTVELKKLDLKISSSSDSLMTSPTIPSDKLAAATEKTGSLGPPNMSVHFNSHLGTIVFGNNSSHLIQSGVPLELSEEDNDSKLLEAPLMNIQESSLRENVLSMESNRLFKEERIRGPASLIKDNALFKVNISSVKTNRAPVNLTTNRKTRVAIPTLLIENSTSVWQDIMLERNTEFKEVTSLIHNETFMDRNTTALGLNHVSNKTTLSKNVEMAHQKKEDPVPLRAENPDLSSSKIPFLPDWIKTHGKNSLSSEQRPSPKQLTSLGSEKSVKDQNFLSEEKVVVGEDEFTKDTELQEIFPNNKSIFFANLANVQENDTYNQEKKSPEEIERKEKLTQENVALPQAHTMIGTKNFLKNLFLLSTKQNVAGLEEQPYTPILQDTRSLNDSPHSEGIHMANFSKIREEANLEGLGNQTNQMVERFPSTTRMSSNASQHVITQRGKRSLKQPRLSQGEIKFERKVIANDTSTQWSKNMNYLAQGTLTQIEYNEKEKRAITQSPLSDCSMRNHVTIQMNDSALPVAKESASPSVRHTDLTKIPSQHNSSHLPASACNYTFRERTSGVQEGSHFLQEAKRNNLSLAFVTLGITEGQGKFSSLGKSATNQPMYKKLENTVLLQPGLSETSDKVELLSQVHVDQEDSFPTKTSNDSPGHLDLMGKIFLQKTQGPVKMNKTNSPGKVPFLKWATESSEKIPSKLLGVLAWDNHYDTQIPSEEWKSQKKSQTNTAFKRKDTILPLGPCENNDSTAAINEGQDKPQREAMWAKQGEPGRLCSQNPPVSKHHQREITVTTLQPEEDKFEYDDTFSIEMKREDFDIYGDYENQGLRSFQKKTRHYFIAAVERLWDYGMSRSPHILRNRAQSGDVQQFKKVVFQEFTDGSFTQPLYRGELNEHLGLLGPYIRAEVEDNIVVTFKNQASRPYSFYSSLISYDEDEGQGAEPRRKFVNPNETKIYFWKVQHHMAPTKDEFDCKAWAYFSDVDLEKDVHSGLIGPLLICRSNTLNPAHGRQVTVQEFALVFTIFDETKSWYFTENLERNCRAPCNVQKEDPTLKENFRFHAINGYVKDTLPGLVMAQDQKVRWYLLSMGSNENIHSIHFSGHVFTVRKKEEYKMAVYNLYPGVFETVEMLPSQVGIWRIECLIGEHLQAGMSTLFLVYSKKCQTPLGMASGHIRDFQITASGQYGQWAPKLARLHYSGSINAWSTKDPFSWIKVDLLAPMIIHGIMTQGARQKFSSLYVSQFIIMYSLDGNKWHSYRGNSTGTLMVFFGNVDSSGIKHNIFNPPIIAQYIRLHPTHYSIRSTLRMELLGCDFNSCSMPLGMESKAISDAQITASSYLSSMLATWSPSQARLHLQGRTNAWRPQANNPKEWLQVDFRKTMKVTGITTQGVKSLLISMYVKEFLISSSQDGHNWTLFLQNGKVKVFQGNRDSSTPVRNRLEPPLVARYVRLHPQSWAHHIALRLEVLGCDTQQPA.

The N-terminal stretch at 1-19 (MQVELYTCCFLCLLPFSLS) is a signal peptide. Plastocyanin-like domains lie at 20 to 199 (ATRK…LLVC) and 207 to 343 (ERTQ…VDSC). Residues 20–343 (ATRKYYLGAV…MEAYVKVDSC (324 aa)) enclose the F5/8 type A 1 domain. Asparagine 233 and asparagine 253 each carry an N-linked (GlcNAc...) asparagine glycan. Residues tyrosine 359 and tyrosine 408 each carry the sulfotyrosine modification. 2 consecutive Plastocyanin-like domains span residues 393 to 567 (KTWV…LLIC) and 577 to 724 (NQMM…VSSC). An F5/8 type A 2 domain is found at 393–724 (KTWVHYIAAE…MTALLKVSSC (332 aa)). Asparagine 595 carries an N-linked (GlcNAc...) asparagine glycan. 3 positions are modified to sulfotyrosine: tyrosine 731, tyrosine 732, and tyrosine 736. Over residues 752-761 (PRSFSQNSRH) the composition is skewed to polar residues. Disordered stretches follow at residues 752–774 (PRSF…ATTT) and 828–865 (ADDH…PEPE). Positions 754–1659 (SFSQNSRHPS…NPPVSKHHQR (906 aa)) are b. Basic and acidic residues-rich tracts occupy residues 828–841 (ADDH…RNKG) and 850–861 (PELRHSEDREFT). Residues asparagine 877, asparagine 921, asparagine 937, asparagine 938, asparagine 956, asparagine 1007, asparagine 1019, asparagine 1037, asparagine 1062, asparagine 1069, and asparagine 1080 are each glycosylated (N-linked (GlcNAc...) asparagine). Positions 1124–1147 (GKNSLSSEQRPSPKQLTSLGSEKS) are disordered. The span at 1125-1147 (KNSLSSEQRPSPKQLTSLGSEKS) shows a compositional bias: polar residues. Asparagine 1179, asparagine 1193, asparagine 1275, asparagine 1290, asparagine 1308, asparagine 1341, asparagine 1391, asparagine 1419, asparagine 1429, asparagine 1453, asparagine 1547, and asparagine 1618 each carry an N-linked (GlcNAc...) asparagine glycan. A compositionally biased stretch (polar residues) spans 1302 to 1314 (TTRMSSNASQHVI). The tract at residues 1302 to 1326 (TTRMSSNASQHVITQRGKRSLKQPR) is disordered. A disordered region spans residues 1592–1632 (KSQKKSQTNTAFKRKDTILPLGPCENNDSTAAINEGQDKPQ). A sulfotyrosine mark is found at tyrosine 1675 and tyrosine 1691. Plastocyanin-like domains follow at residues 1705–1869 (KTRH…LLIC) and 1879–2032 (GRQV…SKKC). Residues 1705–2032 (KTRHYFIAAV…TLFLVYSKKC (328 aa)) enclose the F5/8 type A 3 domain. Residue asparagine 1821 is glycosylated (N-linked (GlcNAc...) asparagine). F5/8 type C domains lie at 2032–2180 (CQTP…LLGC) and 2185–2337 (CSMP…VLGC). Disulfide bonds link cysteine 2032-cysteine 2180 and cysteine 2185-cysteine 2337. Residues asparagine 2129 and asparagine 2281 are each glycosylated (N-linked (GlcNAc...) asparagine).

The protein belongs to the multicopper oxidase family. As to quaternary structure, interacts with vWF. vWF binding is essential for the stabilization of F8 in circulation. In terms of processing, proteolytically cleaved by cathepsin CTSG to produce a partially activated form.

The protein resides in the secreted. It is found in the extracellular space. Factor VIII, along with calcium and phospholipid, acts as a cofactor for factor IXa when it converts factor X to the activated form, factor Xa. The sequence is that of Coagulation factor VIII (F8) from Canis lupus familiaris (Dog).